The sequence spans 802 residues: MSFNHQEIEKKWQGYWEENKTFRTPDETEKPKFYALDMFPYPSGAGLHVGHPEGYTATDILSRMKRMQGYNVLHPMGWDAFGLPAEQYALDTGNSPAEFTEHNINTFRNQIKSLGFSYDWDREVNTTDPNYYKWTQWIFLKLFEKGLAYVDEVPVNWCPALGTVLANEEIIDGKSERGGHPVERRPMRQWMLKITAYGDRLLEDLDELDWPESLKDMQRNWIGRSEGAEVHFNIDGTDEKFTVFTTRPDTLFGASYCVLAPEHALVADITTAEQKEAVEAYINSVKMKSDLERTELAKEKTGVFTGAYAVNPVNGEKLPIWIADYVLATYGTGAVMAVPAHDERDYEFASTFNLPMKEVVKGGDITKEAYTGDGAHVNSAFLDGLNKEEAIAKMIEWLEVTSAGNQKVTYRLRDWLFSRQRYWGEPIPVIHWEDGTMTAVKEEELPLVLPKTENIRPSGTGESPLANIDEWVNVVDPETGKKGRRETNTMPQWAGSCWYYLRYIDPNNSEALVDPEKVKQWLPVDIYIGGAEHAVLHLLYARFWHKVLYDIGVVPTKEPFQQLFNQGMILGENNEKMSKSKGNVVNPDDIVASHGADTLRLYEMFMGPLDASIAWSENGLDGARRFLDRVWRLFVQDNGELSEKITDAPNKDLEKAYHQTVKKVTEDYAELRFNTAISQMMVFINDAYKAETLPKEYVEGFVKMIAPVAPHIGEELWSKLGYNETITYASWPTFDESKLVEDEVEIVVQVMGKVRAKLTMSKDASKDEMEKLALEAIQDQIEGKTVRKVIVVPGKLVNVVAN.

Residues 40 to 51 (PYPSGAGLHVGH) carry the 'HIGH' region motif. Positions 576 to 580 (KMSKS) match the 'KMSKS' region motif. ATP is bound at residue Lys579.

Belongs to the class-I aminoacyl-tRNA synthetase family.

The protein resides in the cytoplasm. The enzyme catalyses tRNA(Leu) + L-leucine + ATP = L-leucyl-tRNA(Leu) + AMP + diphosphate. The protein is Leucine--tRNA ligase of Bacillus thuringiensis subsp. konkukian (strain 97-27).